Reading from the N-terminus, the 150-residue chain is Large ribosomal subunit protein bL9 (150 aa).

Belongs to the bacterial ribosomal protein bL9 family.

Functionally, binds to the 23S rRNA. In Halorhodospira halophila (strain DSM 244 / SL1) (Ectothiorhodospira halophila (strain DSM 244 / SL1)), this protein is Large ribosomal subunit protein bL9.